The primary structure comprises 917 residues: Hexokinase HKDC1 (917 aa).

The tract at residues 1 to 20 (MFAVHLMAFYFSKLKEDQIK) is mitochondrial-binding peptide (MBP). Hexokinase domains lie at 16 to 458 (EDQI…MVTA) and 464 to 905 (QAQR…LITA). ATP-binding positions include Arg-30 and 84–89 (DLGGSK). Positions 73 to 207 (DGSENGEFLS…DMDVDILALV (135 aa)) are hexokinase small subdomain 1. 84–91 (DLGGSKFR) contributes to the D-glucose 6-phosphate binding site. D-glucose contacts are provided by residues Ser-155, 172–173 (TK), and 208–209 (ND). The segment at 208 to 447 (NDTVGTMMTC…CDVRFLLSES (240 aa)) is hexokinase large subdomain 1. Residues Asp-209 and Thr-232 each coordinate D-glucose 6-phosphate. D-glucose is bound by residues Asn-235, Glu-260, and 291–294 (QLFE). 413–415 (DGT) is a D-glucose 6-phosphate binding site. Residue 425 to 426 (KR) coordinates ATP. D-glucose 6-phosphate contacts are provided by residues Ser-449 and 532 to 536 (DLGGT). The segment at 521–654 (DGTEKGKFLA…EFDLDIVAVV (134 aa)) is hexokinase small subdomain 2. 532-537 (DLGGTN) is a binding site for ATP. Residues 602–603 (SF), 619–620 (TK), and 655–656 (ND) each bind D-glucose. Residues 655–894 (NDTVGTMMTC…CDVTFMLSED (240 aa)) form a hexokinase large subdomain 2 region. Residues Asp-656 and Thr-679 each contribute to the D-glucose 6-phosphate site. Thr-679 contacts ATP. D-glucose contacts are provided by residues 681-682 (SN), Glu-707, and Glu-741. ATP-binding positions include 746 to 747 (GM), 783 to 787 (TKFLS), and 862 to 866 (TLYKL). D-glucose 6-phosphate-binding positions include 860-862 (DGT) and Ser-896.

Belongs to the hexokinase family. As to expression, widely expressed. Highly expressed in the brush border, surface epithelium and the myenteric plexus of the small and large intestines; the acinar centrocytes and interlobular ducts of the pancreas; and the alveolar macrophages in the lungs (at protein level). Present at moderate level in the thyroid follicular epithelium (at protein level).

Its subcellular location is the cytoplasm. The protein localises to the mitochondrion membrane. The protein resides in the photoreceptor inner segment. It catalyses the reaction a D-hexose + ATP = a D-hexose 6-phosphate + ADP + H(+). It carries out the reaction D-glucose + ATP = D-glucose 6-phosphate + ADP + H(+). Its pathway is carbohydrate metabolism; hexose metabolism. It participates in carbohydrate degradation; glycolysis; D-glyceraldehyde 3-phosphate and glycerone phosphate from D-glucose: step 1/4. Functionally, catalyzes the phosphorylation of hexose to hexose 6-phosphate, although at very low level compared to other hexokinases. Has low glucose phosphorylating activity compared to other hexokinases. Involved in glucose homeostasis and hepatic lipid accumulation. Required to maintain whole-body glucose homeostasis during pregnancy; however additional evidences are required to confirm this role. In Homo sapiens (Human), this protein is Hexokinase HKDC1.